A 337-amino-acid chain; its full sequence is GTPase Obg (337 aa).

An Obg domain is found at 1-159 (MDFIDEVKLY…RNIVLKLKVL (159 aa)). One can recognise an OBG-type G domain in the interval 160–329 (SDVGIIGMPN…LNEKVKTKEI (170 aa)). GTP-binding positions include 166 to 173 (GMPNVGKS), 191 to 195 (FTTIR), 212 to 215 (DIPG), 279 to 282 (NKCD), and 310 to 312 (DDD). Residues S173 and T193 each coordinate Mg(2+).

This sequence belongs to the TRAFAC class OBG-HflX-like GTPase superfamily. OBG GTPase family. In terms of assembly, monomer. It depends on Mg(2+) as a cofactor.

It localises to the cytoplasm. Functionally, an essential GTPase which binds GTP, GDP and possibly (p)ppGpp with moderate affinity, with high nucleotide exchange rates and a fairly low GTP hydrolysis rate. Plays a role in control of the cell cycle, stress response, ribosome biogenesis and in those bacteria that undergo differentiation, in morphogenesis control. In Wolbachia pipientis subsp. Culex pipiens (strain wPip), this protein is GTPase Obg.